Here is a 151-residue protein sequence, read N- to C-terminus: Large ribosomal subunit protein bL9 (151 aa).

It belongs to the bacterial ribosomal protein bL9 family.

Its function is as follows. Binds to the 23S rRNA. The polypeptide is Large ribosomal subunit protein bL9 (Lactobacillus helveticus (strain DPC 4571)).